We begin with the raw amino-acid sequence, 470 residues long: Flavin-containing monooxygenase FMO GS-OX-like 6 (470 aa).

17–22 (GAGAAG) provides a ligand contact to FAD. Residue 214-219 (GYQSSG) participates in NADP(+) binding.

It belongs to the FMO family. FAD serves as cofactor.

Catalyzes the conversion of methylthioalkyl glucosinolates of any chain length into methylsulfinylalkyl glucosinolates. The chain is Flavin-containing monooxygenase FMO GS-OX-like 6 from Arabidopsis thaliana (Mouse-ear cress).